We begin with the raw amino-acid sequence, 400 residues long: uncharacterized protein (400 aa).

This is an uncharacterized protein from Saccharomyces cerevisiae (strain ATCC 204508 / S288c) (Baker's yeast).